A 392-amino-acid chain; its full sequence is Integrin-linked kinase-associated serine/threonine phosphatase 2C (392 aa).

Methionine 1 is subject to N-acetylmethionine. Positions 1 to 91 (MDLFGDLPEP…PEEEKNGGEE (91 aa)) are disordered. Polar residues predominate over residues 56–70 (SGNSGSLATSGSQVV). Over residues 72–91 (TEGKGAKRKAPEEEKNGGEE) the composition is skewed to basic and acidic residues. The PPM-type phosphatase domain maps to 108 to 390 (KGYVAERKGE…DNVTVMVVRI (283 aa)). The Mn(2+) site is built by aspartate 152 and glycine 153. The residue at position 210 (lysine 210) is an N6-acetyllysine. 2 residues coordinate Mn(2+): aspartate 326 and aspartate 381.

This sequence belongs to the PP2C family. As to quaternary structure, interacts with ILK. It depends on Mg(2+) as a cofactor. Requires Mn(2+) as cofactor.

The protein resides in the cytoplasm. It catalyses the reaction O-phospho-L-seryl-[protein] + H2O = L-seryl-[protein] + phosphate. The catalysed reaction is O-phospho-L-threonyl-[protein] + H2O = L-threonyl-[protein] + phosphate. Its function is as follows. Protein phosphatase that may play a role in regulation of cell cycle progression via dephosphorylation of its substrates whose appropriate phosphorylation states might be crucial for cell proliferation. Selectively associates with integrin linked kinase (ILK), to modulate cell adhesion and growth factor signaling. Inhibits the ILK-GSK3B signaling axis and may play an important role in inhibiting oncogenic transformation. This Mus musculus (Mouse) protein is Integrin-linked kinase-associated serine/threonine phosphatase 2C (Ilkap).